A 290-amino-acid polypeptide reads, in one-letter code: 4-hydroxy-tetrahydrodipicolinate synthase (290 aa).

Residue Thr-44 coordinates pyruvate. Tyr-132 acts as the Proton donor/acceptor in catalysis. The active-site Schiff-base intermediate with substrate is Lys-160. Ile-202 lines the pyruvate pocket.

It belongs to the DapA family. Homotetramer; dimer of dimers.

It is found in the cytoplasm. The catalysed reaction is L-aspartate 4-semialdehyde + pyruvate = (2S,4S)-4-hydroxy-2,3,4,5-tetrahydrodipicolinate + H2O + H(+). Its pathway is amino-acid biosynthesis; L-lysine biosynthesis via DAP pathway; (S)-tetrahydrodipicolinate from L-aspartate: step 3/4. Catalyzes the condensation of (S)-aspartate-beta-semialdehyde [(S)-ASA] and pyruvate to 4-hydroxy-tetrahydrodipicolinate (HTPA). The polypeptide is 4-hydroxy-tetrahydrodipicolinate synthase (Geobacter sulfurreducens (strain ATCC 51573 / DSM 12127 / PCA)).